The sequence spans 240 residues: MNAEKSPVNHNVDHEEIAKFEAVASRWWDLEGEFKPLHRINPLRLGYIAERAGGLFGKKVLDVGCGGGILAESMAREGATVTGLDMGFEPLQVAKLHALESGIQVDYVQETVEEHAAKHAGQYDVVTCMEMLEHVPDPQSVVRACAQLVKPGGDVFFSTLNRNGKSWLMAVVGAEHILRMVPKGTHDVKKFIKPAELLGWVDQTSLKERHITGLHYNPITNTFKLGPGVDVNYMLHTQNK.

4 residues coordinate S-adenosyl-L-methionine: Arg44, Gly64, Asp85, and Met129.

It belongs to the methyltransferase superfamily. UbiG/COQ3 family.

It carries out the reaction a 3-demethylubiquinol + S-adenosyl-L-methionine = a ubiquinol + S-adenosyl-L-homocysteine + H(+). The catalysed reaction is a 3-(all-trans-polyprenyl)benzene-1,2-diol + S-adenosyl-L-methionine = a 2-methoxy-6-(all-trans-polyprenyl)phenol + S-adenosyl-L-homocysteine + H(+). It functions in the pathway cofactor biosynthesis; ubiquinone biosynthesis. Functionally, O-methyltransferase that catalyzes the 2 O-methylation steps in the ubiquinone biosynthetic pathway. This is Ubiquinone biosynthesis O-methyltransferase from Escherichia coli O9:H4 (strain HS).